Reading from the N-terminus, the 215-residue chain is MERSKGAILVLSGPSGSGKSSLCKTLFKEIKNAYFSVSTTTRTPREGEIEGKHYHFVSKEKFLEGIEENFFLEWAEVHGNYYGTSKESVESALAQGKLVVFDIDIQGHRNIKESYPELTTSVFITTPTQQELRERLVLRGTDDKETIDLRVMHAYTEMKHIKEFDFVIVNRDLKESEKLLLSIARAALSKRILYDVESLVARWKSKETPKTPNSQ.

Residues 6–185 (GAILVLSGPS…SEKLLLSIAR (180 aa)) enclose the Guanylate kinase-like domain. Residue 13 to 20 (GPSGSGKS) participates in ATP binding.

It belongs to the guanylate kinase family.

The protein localises to the cytoplasm. It carries out the reaction GMP + ATP = GDP + ADP. Its function is as follows. Essential for recycling GMP and indirectly, cGMP. This Wolinella succinogenes (strain ATCC 29543 / DSM 1740 / CCUG 13145 / JCM 31913 / LMG 7466 / NCTC 11488 / FDC 602W) (Vibrio succinogenes) protein is Guanylate kinase.